Reading from the N-terminus, the 497-residue chain is Glycine receptor subunit beta (497 aa).

The N-terminal stretch at 1 to 22 (MKFLLTTAFLILISLWVEEAYS) is a signal peptide. The Extracellular segment spans residues 23-268 (KEKSSKKGKG…IFTLRRQVGF (246 aa)). Asn54 carries an N-linked (GlcNAc...) asparagine glycan. Residues Arg108 and Ser174 each coordinate glycine. Residues Cys183 and Cys197 are joined by a disulfide bond. Residue Asn242 is glycosylated (N-linked (GlcNAc...) asparagine). Cys243 and Cys255 are joined by a disulfide. Thr250 lines the glycine pocket. A helical transmembrane segment spans residues 269 to 289 (YMMGVYAPTLLIVVLSWLSFW). At 290 to 294 (INPDA) the chain is on the cytoplasmic side. The chain crosses the membrane as a helical span at residues 295 to 315 (SAARVPLGIFSVLSLASECTT). Residues 316–327 (LAAELPKVSYVK) are Extracellular-facing. The helical transmembrane segment at 328–349 (ALDVWLIACLLFGFASLVEYAV) threads the bilayer. Over 350–472 (VQVMLNNPKR…KPVIPTAAKR (123 aa)) the chain is Cytoplasmic. Position 391 is a phosphothreonine (Thr391). A helical transmembrane segment spans residues 473 to 496 (IDLYARALFPFCFLFFNVIYWSIY).

Belongs to the ligand-gated ion channel (TC 1.A.9) family. Glycine receptor (TC 1.A.9.3) subfamily. GLRB sub-subfamily. In terms of assembly, forms heteropentamers with glycin receptor alpha subunits. Heteropentamers with GLRA1 can be composed of two GLRA1 and three GLRB subunits, or three GLRA1 and two GLRB subunits, or four GLRA1 subunits and one GLRB subunit. Forms heteropentamers with GLRA2. Functional GLRB-GLRA2 heteropentamers contain four GLRA2 subunits and one GLRB subunit, although alternative subunit composition cannot be excluded. Forms a heteropentamer with GLRA3. Interacts with GPHN.

Its subcellular location is the postsynaptic cell membrane. It localises to the synapse. The protein resides in the cell projection. It is found in the dendrite. The protein localises to the cell membrane. Its subcellular location is the cytoplasm. It carries out the reaction chloride(in) = chloride(out). With respect to regulation, channel opening is triggered by extracellular glycine. Heteropentameric channels composed of GLRB and GLRA1 are activated by lower glycine levels than homopentameric GLRA1. Functionally, subunit of heteromeric glycine-gated chloride channels. Plays an important role in the down-regulation of neuronal excitability. Contributes to the generation of inhibitory postsynaptic currents. This Homo sapiens (Human) protein is Glycine receptor subunit beta (GLRB).